An 840-amino-acid polypeptide reads, in one-letter code: Serotype-specific mannosyltransferase WbdA (840 aa).

Residues 2-399 (HILIDVQGYQ…WANTAHLAIE (398 aa)) form an alpha-(1-&gt;2)-mannosyltransferase region. The interval 456 to 829 (KLLVDISVLA…WKQSAEFLLK (374 aa)) is alpha-(1-&gt;3)-mannosyltransferase.

This sequence belongs to the glycosyltransferase group 1 family. Glycosyltransferase 4 subfamily. Monomer. Interacts with the C-terminal region of WbdD. Interacts with WbdD via a surface-exposed alpha-helix in the C-terminal mannosyltransferase domain. However, the C-terminal domain is unable to interact with WbdD in the absence of its N-terminal partner.

It is found in the cell inner membrane. It carries out the reaction [alpha-D-Man-(1-&gt;3)-alpha-D-Man-(1-&gt;3)-alpha-D-Man-(1-&gt;2)-alpha-D-Man-(1-&gt;2)](n)-alpha-D-Man-(1-&gt;3)-alpha-D-Man-(1-&gt;3)-alpha-D-Man-(1-&gt;3)-alpha-D-GlcNAc-di-trans,octa-cis-undecaprenyl diphosphate + 2 GDP-alpha-D-mannose = alpha-D-Man-(1-&gt;2)-alpha-D-Man-(1-&gt;2)-[alpha-D-Man-(1-&gt;3)-alpha-D-Man-(1-&gt;3)-alpha-D-Man-(1-&gt;2)-alpha-D-Man-(1-&gt;2)](n)-alpha-D-Man-(1-&gt;3)-alpha-D-Man-(1-&gt;3)-alpha-D-Man-(1-&gt;3)-alpha-D-GlcNAc-di-trans,octa-cis-undecaprenyl diphosphate + 2 GDP + 2 H(+). It catalyses the reaction alpha-D-Man-(1-&gt;2)-alpha-D-Man-(1-&gt;2)-[alpha-D-Man-(1-&gt;3)-alpha-D-Man-(1-&gt;3)-alpha-D-Man-(1-&gt;2)-alpha-D-Man-(1-&gt;2)](n)-alpha-D-Man-(1-&gt;3)-alpha-D-Man-(1-&gt;3)-alpha-D-Man-(1-&gt;3)-alpha-D-GlcNAc-di-trans,octa-cis-undecaprenyl diphosphate + 2 GDP-alpha-D-mannose = [alpha-D-Man-(1-&gt;3)-alpha-D-Man-(1-&gt;3)-alpha-D-Man-(1-&gt;2)-alpha-D-Man-(1-&gt;2)](n+1)-alpha-D-Man-(1-&gt;3)-alpha-D-Man-(1-&gt;3)-alpha-D-Man-(1-&gt;3)-alpha-D-GlcNAc-di-trans,octa-cis-undecaprenyl diphosphate + 2 GDP + 2 H(+). It participates in bacterial outer membrane biogenesis; LPS O-antigen biosynthesis. With respect to regulation, the alpha-(1-&gt;2)-mannosyltransferase activity of the N-terminal domain is regulated by the activity of the C-terminal alpha-(1-&gt;3)-mannosyltransferase. The relative concentration of WbdA and WbdD is critical in determining the O polysaccharide (OPS) modal chain length. OPS chain length increases with increasing concentration of WbdA, but the maximum length does not increase beyond the wild-type modal length, despite substantial increases in WbdA concentration. Its function is as follows. Mannosyltransferase involved in the biosynthesis of the repeat unit of the lipopolysaccharide (LPS) O-antigen region. Catalyzes the polymerization of a tetrasaccharide repeat unit containing two alpha-(1-&gt;3)- and two alpha-(1-&gt;2)-linked mannopyranose residues. Extension is terminated by the action of the chain terminator bifunctional methyltransferase/kinase WbdD. This chain is Serotype-specific mannosyltransferase WbdA, found in Escherichia coli.